The following is a 65-amino-acid chain: Large ribosomal subunit protein bL35 (65 aa).

Basic residues predominate over residues 1–15 (MPKMKTKKSASKRFQ). Positions 1–27 (MPKMKTKKSASKRFQVRGSGSIKRGQA) are disordered.

This sequence belongs to the bacterial ribosomal protein bL35 family.

This chain is Large ribosomal subunit protein bL35, found in Bordetella petrii (strain ATCC BAA-461 / DSM 12804 / CCUG 43448).